The chain runs to 311 residues: Tryptophan 2,3-dioxygenase (311 aa).

Residues methionine 1–aspartate 37 form a disordered region. Low complexity predominate over residues alanine 17–histidine 27. Substrate contacts are provided by residues phenylalanine 80 to histidine 84, tyrosine 142, and arginine 146. Histidine 269 lines the heme pocket. A substrate-binding site is contributed by threonine 283.

Belongs to the tryptophan 2,3-dioxygenase family. In terms of assembly, homotetramer. Requires heme as cofactor.

It carries out the reaction L-tryptophan + O2 = N-formyl-L-kynurenine. It functions in the pathway amino-acid degradation; L-tryptophan degradation via kynurenine pathway; L-kynurenine from L-tryptophan: step 1/2. Its function is as follows. Heme-dependent dioxygenase that catalyzes the oxidative cleavage of the L-tryptophan (L-Trp) pyrrole ring and converts L-tryptophan to N-formyl-L-kynurenine. Catalyzes the oxidative cleavage of the indole moiety. The sequence is that of Tryptophan 2,3-dioxygenase from Burkholderia orbicola (strain MC0-3).